The chain runs to 225 residues: Orotate phosphoribosyltransferase (225 aa).

Residue Lys-29 participates in 5-phospho-alpha-D-ribose 1-diphosphate binding. 37-38 (FF) contacts orotate. Residues 75–76 (YK), Arg-101, Lys-102, Lys-105, His-107, and 126–134 (DDVISAGTS) contribute to the 5-phospho-alpha-D-ribose 1-diphosphate site. Ser-130 and Arg-158 together coordinate orotate.

This sequence belongs to the purine/pyrimidine phosphoribosyltransferase family. PyrE subfamily. In terms of assembly, homodimer. Requires Mg(2+) as cofactor.

It catalyses the reaction orotidine 5'-phosphate + diphosphate = orotate + 5-phospho-alpha-D-ribose 1-diphosphate. Its pathway is pyrimidine metabolism; UMP biosynthesis via de novo pathway; UMP from orotate: step 1/2. Catalyzes the transfer of a ribosyl phosphate group from 5-phosphoribose 1-diphosphate to orotate, leading to the formation of orotidine monophosphate (OMP). This Ralstonia pickettii (strain 12J) protein is Orotate phosphoribosyltransferase.